Here is a 251-residue protein sequence, read N- to C-terminus: Extracellular superoxide dismutase [Cu-Zn] (251 aa).

The N-terminal stretch at 1–15 is a signal peptide; sequence MLAFLFYGLLLAACG. A propeptide spanning residues 16–24 is cleaved from the precursor; that stretch reads SVTMSNPGE. 2 disulfides stabilise this stretch: Cys77/Cys222 and Cys139/Cys221. An N-linked (GlcNAc...) asparagine glycan is attached at Asn121. Residues His128, His130, and His145 each coordinate Cu cation. Residues His145, His153, His156, and Asp159 each coordinate Zn(2+). His195 provides a ligand contact to Cu cation. Positions 230–251 are disordered; it reads AAWESQTKERKKRRRESECKTT.

It belongs to the Cu-Zn superoxide dismutase family. In terms of assembly, homotetramer. Directly interacts with ATP7A/MNK; this interaction is copper-dependent and is required for SOD3 activity. Requires Cu cation as cofactor. The cofactor is Zn(2+).

It localises to the secreted. The protein resides in the extracellular space. Its subcellular location is the golgi apparatus. The protein localises to the trans-Golgi network. The enzyme catalyses 2 superoxide + 2 H(+) = H2O2 + O2. Functionally, protect the extracellular space from toxic effect of reactive oxygen intermediates by converting superoxide radicals into hydrogen peroxide and oxygen. The protein is Extracellular superoxide dismutase [Cu-Zn] (Sod3) of Mus musculus (Mouse).